Consider the following 207-residue polypeptide: Ras-related protein Rab-8A (207 aa).

The GTP site is built by Ser-17, Gly-18, Val-19, Gly-20, Lys-21, Thr-22, Cys-23, Ser-35, Ser-39, and Thr-40. Mg(2+) is bound at residue Thr-22. 2 short sequence motifs (switch) span residues 31–45 (DAFN…GIDF) and 63–80 (DTAG…YYRG). The Mg(2+) site is built by Thr-40 and Asp-63. Gly-66 is a GTP binding site. Thr-72 is modified (phosphothreonine). Residues Asn-121, Lys-122, Asp-124, Ala-152, and Lys-153 each coordinate GTP. Ser-181 and Ser-185 each carry phosphoserine. Cys-204 is subject to Cysteine methyl ester. The S-geranylgeranyl cysteine moiety is linked to residue Cys-204. Residues 205 to 207 (VLL) constitute a propeptide, removed in mature form.

It belongs to the small GTPase superfamily. Rab family. Interacts (GTP-bound form) with MICALL1; regulates RAB8A association with recycling endosomes. Interacts with MICALL2; competes with RAB13 and is involved in E-cadherin endocytic recycling. Interacts (GTP-bound form) with MICAL1, MICALCL, MICAL3, EHBP1 and EHBP1L1; at least in case of MICAL1, MICALCL, MICAL3 and EHBP1L1 two molecules of RAB8A can bind to one molecule of the effector protein; ternary complexes of RAB8A, RAB13 and either MICAL1 or EHBP1L1 are possible. Interacts with EHD1. Interacts with MAP4K2 and SYTL4. Interacts with SGSM1 and SGSM3. Interacts with RABIF, RIMS2, RPH3A and RPH3A. Interacts with OPTN. Interacts with RAB3IP, RAB3IP functions as guanine exchange factor (GEF). Interacts with MYO5B. Interacts with CIMAP3. Interacts with BIRC6/bruce. Interacts with OCRL. Interacts with AHI1. Interacts with DCDC1. Interacts with LRRK2; interaction facilitates phosphorylation of Thr-72. Interacts with RAB31P, GDI1, GDI2, CHM, CHML, RABGGTA, RABGGTB, TBC1D15 and INPP5B; these interactions are dependent on Thr-72 not being phosphorylated. Interacts with RILPL1 and RILPL2; these interactions are dependent on the phosphorylation of Thr-72 by LRRK2. Interacts with DZIP1; prevents inhibition by the GDP-dissociation inhibitor GDI2. Interacts (in GDP-bound form) with RAB3IP/Rabin8, RAB3IP functions as guanine exchange factor (GEF) towards RAB8A. Interacts (in GDP-bound form) with RPGR, RPGR functions as GEF towards RAB8A. Requires Mg(2+) as cofactor. In terms of processing, phosphorylation of Thr-72 in the switch II region by LRRK2 prevents the association of RAB regulatory proteins, including CHM, CHML and RAB GDP dissociation inhibitors GDI1 and GDI2. Phosphorylation by LRRK2 is required for localization to stressed lysosomes.

It localises to the cell membrane. It is found in the golgi apparatus. The protein resides in the endosome membrane. Its subcellular location is the recycling endosome membrane. The protein localises to the cell projection. It localises to the cilium. It is found in the cytoplasmic vesicle. The protein resides in the phagosome membrane. Its subcellular location is the cytoplasm. The protein localises to the cytoskeleton. It localises to the microtubule organizing center. It is found in the centrosome. The protein resides in the centriole. Its subcellular location is the cilium basal body. The protein localises to the midbody. It localises to the lysosome. The catalysed reaction is GTP + H2O = GDP + phosphate + H(+). Its activity is regulated as follows. Regulated by guanine nucleotide exchange factors (GEFs) such as RAB3IP/Rabin8 and RPGR which promote the exchange of bound GDP for free GTP, GTPase activating proteins (GAPs) which increase the GTP hydrolysis activity, and GDP dissociation inhibitors (GDIs) which inhibit the dissociation of the nucleotide from the GTPase. Activated in response to insulin. The small GTPases Rab are key regulators of intracellular membrane trafficking, from the formation of transport vesicles to their fusion with membranes. Rabs cycle between an inactive GDP-bound form and an active GTP-bound form that is able to recruit to membranes different sets of downstream effectors directly responsible for vesicle formation, movement, tethering and fusion. RAB8A is involved in polarized vesicular trafficking and neurotransmitter release. Together with RAB11A, RAB3IP, the exocyst complex, PARD3, PRKCI, ANXA2, CDC42 and DNMBP promotes transcytosis of PODXL to the apical membrane initiation sites (AMIS), apical surface formation and lumenogenesis. Regulates the compacted morphology of the Golgi. Together with MYO5B and RAB11A participates in epithelial cell polarization. Also involved in membrane trafficking to the cilium and ciliogenesis. Together with MICALL2, may also regulate adherens junction assembly. May play a role in insulin-induced transport to the plasma membrane of the glucose transporter GLUT4 and therefore play a role in glucose homeostasis. Involved in autophagy. Participates in the export of a subset of neosynthesized proteins through a Rab8-Rab10-Rab11-dependent endososomal export route. Targeted to and stabilized on stressed lysosomes through LRRK2 phosphorylation. Suppresses stress-induced lysosomal enlargement through EHBP1 and EHNP1L1 effector proteins. The sequence is that of Ras-related protein Rab-8A (RAB8A) from Pongo abelii (Sumatran orangutan).